The sequence spans 422 residues: MTIIVDIIGREVLDSRGNPTVEVDVYLENGAFGRALVPSGASTGAHEAIELRDGDLRYQGKGVEKAVAAVNGEILEELGGRDARDQIAIDQAMIALDGTPNKARLGANALLGVSLAVAKAAADSLNLPLYRYIGGTQAHILPTPMMNIINGGVHADNLIDFQEFMIIPVGAPSVKEAIRYGAEIFHALKKRLKDAGYNTNVGDEGGFAPQFKSADQAIDFIMESIIACGYKPGEQIAIGLDCASTEFYKNGSYFYKGEGKCRNIAEQVDYLAQLVKSYPIVTIEDGMAEDDWEGWKLLTDTIGTKCQMVGDDLFVTNSARLRDGIKMGVGNSILIKVNQIGTLSETLDAVEVAHKAGYRAIISHRSGETEDSFIADLAVATNCGQIKTGSLARSDRLAKYNQLIRIEEMLGSQARYAGDIYR.

Residue glutamine 162 participates in (2R)-2-phosphoglycerate binding. The active-site Proton donor is glutamate 204. 3 residues coordinate Mg(2+): aspartate 241, glutamate 284, and aspartate 311. The (2R)-2-phosphoglycerate site is built by lysine 336, arginine 365, serine 366, and lysine 387. Lysine 336 acts as the Proton acceptor in catalysis.

Belongs to the enolase family. The cofactor is Mg(2+).

It localises to the cytoplasm. The protein localises to the secreted. It is found in the cell surface. It carries out the reaction (2R)-2-phosphoglycerate = phosphoenolpyruvate + H2O. It functions in the pathway carbohydrate degradation; glycolysis; pyruvate from D-glyceraldehyde 3-phosphate: step 4/5. Catalyzes the reversible conversion of 2-phosphoglycerate (2-PG) into phosphoenolpyruvate (PEP). It is essential for the degradation of carbohydrates via glycolysis. This is Enolase from Bartonella tribocorum (strain CIP 105476 / IBS 506).